Consider the following 521-residue polypeptide: Cytochrome P450 1A1 (521 aa).

Phenylalanine 229 serves as a coordination point for substrate. Cysteine 463 serves as a coordination point for heme.

The protein belongs to the cytochrome P450 family. The cofactor is heme.

Its subcellular location is the endoplasmic reticulum membrane. The protein resides in the microsome membrane. The enzyme catalyses an organic molecule + reduced [NADPH--hemoprotein reductase] + O2 = an alcohol + oxidized [NADPH--hemoprotein reductase] + H2O + H(+). Cytochromes P450 are a group of heme-thiolate monooxygenases. They oxidize a variety of structurally unrelated compounds, including steroids, fatty acids, and xenobiotics. This Oryzias latipes (Japanese rice fish) protein is Cytochrome P450 1A1 (cyp1a1).